The primary structure comprises 78 residues: Putative membrane protein insertion efficiency factor (78 aa).

Belongs to the UPF0161 family.

It localises to the cell membrane. Its function is as follows. Could be involved in insertion of integral membrane proteins into the membrane. This Limosilactobacillus reuteri (strain DSM 20016) (Lactobacillus reuteri) protein is Putative membrane protein insertion efficiency factor.